The following is a 327-amino-acid chain: Ribonucleoside-diphosphate reductase small chain (327 aa).

Asp70, Glu101, and His104 together coordinate Fe cation. Tyr108 is a catalytic residue. 3 residues coordinate Fe cation: Glu164, Glu198, and His201.

It belongs to the ribonucleoside diphosphate reductase small chain family. Heterotetramer composed of a homodimer of the large subunit (R1) and a homodimer of the small subunit (R2). Larger multisubunit protein complex are also active, composed of (R1)n(R2)n. Fe cation is required as a cofactor.

It catalyses the reaction a 2'-deoxyribonucleoside 5'-diphosphate + [thioredoxin]-disulfide + H2O = a ribonucleoside 5'-diphosphate + [thioredoxin]-dithiol. Its function is as follows. Ribonucleoside-diphosphate reductase holoenzyme provides the precursors necessary for viral DNA synthesis. Allows virus growth in non-dividing cells. Catalyzes the biosynthesis of deoxyribonucleotides from the corresponding ribonucleotides. In African swine fever virus (isolate Tick/Malawi/Lil 20-1/1983) (ASFV), this protein is Ribonucleoside-diphosphate reductase small chain.